The chain runs to 168 residues: Prolyl-tRNA synthetase associated domain-containing protein 1 (168 aa).

It belongs to the PRORSD1 family.

In Xenopus laevis (African clawed frog), this protein is Prolyl-tRNA synthetase associated domain-containing protein 1 (prorsd1p).